Here is a 218-residue protein sequence, read N- to C-terminus: Non-structural protein NP-1 (218 aa).

Disordered stretches follow at residues Met1 to Pro89 and Thr195 to Asn218. Composition is skewed to basic residues over residues Asp8–Ser18 and Pro27–Ile40. Positions Ser58–Lys67 are enriched in polar residues. Residues Thr73–Arg86 are compositionally biased toward basic and acidic residues. A compositionally biased stretch (acidic residues) spans Glu196 to Met205.

This sequence belongs to the Bocaparvovirus Non-structural protein NP-1 family.

It localises to the host nucleus. Required for the expression of the capsid proteins. Performs the splicing and internal polyadenylation of the viral capsid-encoding mRNA precursor, which allows its maturation and expression. Transactivates the viral promoter. In Human bocavirus 3 (HBoV3), this protein is Non-structural protein NP-1 (NP1).